Consider the following 428-residue polypeptide: Tryptophan synthase beta chain (428 aa).

Lysine 92 is modified (N6-(pyridoxal phosphate)lysine).

Belongs to the TrpB family. Tetramer of two alpha and two beta chains. The cofactor is pyridoxal 5'-phosphate.

The catalysed reaction is (1S,2R)-1-C-(indol-3-yl)glycerol 3-phosphate + L-serine = D-glyceraldehyde 3-phosphate + L-tryptophan + H2O. It functions in the pathway amino-acid biosynthesis; L-tryptophan biosynthesis; L-tryptophan from chorismate: step 5/5. Functionally, the beta subunit is responsible for the synthesis of L-tryptophan from indole and L-serine. This is Tryptophan synthase beta chain from Leptothrix cholodnii (strain ATCC 51168 / LMG 8142 / SP-6) (Leptothrix discophora (strain SP-6)).